Consider the following 1070-residue polypeptide: MPKREDIKKVLLIGSGPITIGQAAEFDFSGSQACRSLKEEGVQVVLVNSNPATIMTDPEMADSVYIEPLDARIVEKIIEKERPDGIIAGIGGQTGLNITSELAEMGVFEKYGVQILGTPVEAIKNTEDRELFKETMLRIGEKVPQSRAVHTLKEAEEVVEELGLPLIVRPAYTLGGAGGGIARTKEELLEITERGLRRSRISQVLIEESVLGWAEVEYEVMRDANDTCIVICNMENIDPMGVHTGESAVVAPSQTLTDAEHQMLRSASIKIIRALKIEGGCNIQYALKEGDYRIVEVNPRVSRSSALASKATGYPIARVTAKIAIGMALDEIINSVTKNTPASFEPALDYVITKIPRWPFDKFVTADKTLTTAMKSTGEIMAIGRTMEESLLKAFKSLDIDSQLGNKRWDEHEVKTLLKTPTSERLFVIFHALERGMSVKEIAELTSINPFFISKIKKIVEMEKRIRTEELTSELLREVKKLGFPDTRLAELTGKTREQISDLRHDAGILATFKMVDTCAAEFQAATPYYYSTYEDTCETNPTDRKKILILGAGPIRIGQGIEFDYCTVHAVTALREEGIETHIINNNPETVSTDFDTSDKLFFEPLTMEYVMNVIERERPDGVLVQFGGQTSVNLALPLKKELKRRTDLDTMIMGTDPEDMDLAEDREKFYVLMQKFGILQPEGGYATSQHEAIEVAQRIGFPVLVRPSYVLGGRAMEIVYDEIDLERYMKEAVRVSPEHPILIDDFLEGACEIDVDAVCDRKDVLIGAIMEHIEEAGVHSGDSACVIPPQSLSEDVLAQVRDYTRKIALGLRVKGLINIQMAEKGGKVFVLEANPRSSRTIPFVSKAVGLPLAKIAARVIAGHSLKEMGYTDEPKPKHVSIKEVLLPFDKLPGADPVLGPEMKSTGEVMGIDYDFGRAYYKAELAADNLLPLTGKVFLSIRNADKPELVEVARKLQAAGLELMGTRGTVNYLAQHGVFMDTVKKVHDGSPNVIDMMRRDEVDLIINTPTSKQSRRDGSRIRRAAVDFKVPYITTIQAASAAAAAIETMKKGEDLTIKSINEYHKEMGL.

Residues 1–399 are carboxyphosphate synthetic domain; it reads MPKREDIKKV…SLLKAFKSLD (399 aa). ATP contacts are provided by Arg129, Arg169, Gly175, Gly176, Glu208, Val210, Glu215, Gly241, Val242, His243, Gln284, and Glu296. Residues 133 to 325 form the ATP-grasp 1 domain; that stretch reads KETMLRIGEK…IARVTAKIAI (193 aa). The Mg(2+) site is built by Gln284, Glu296, and Asn298. Residues Gln284, Glu296, and Asn298 each coordinate Mn(2+). The interval 400 to 540 is oligomerization domain; it reads IDSQLGNKRW…YSTYEDTCET (141 aa). The carbamoyl phosphate synthetic domain stretch occupies residues 541–931; sequence NPTDRKKILI…YKAELAADNL (391 aa). An ATP-grasp 2 domain is found at 672-863; that stretch reads YVLMQKFGIL…LAKIAARVIA (192 aa). 10 residues coordinate ATP: Arg708, Asp747, Leu749, Glu754, Gly779, Val780, His781, Ser782, Gln822, and Glu834. Mg(2+) is bound by residues Gln822, Glu834, and Asn836. Mn(2+)-binding residues include Gln822, Glu834, and Asn836. The MGS-like domain maps to 930-1070; sequence NLLPLTGKVF…INEYHKEMGL (141 aa). The segment at 932 to 1070 is allosteric domain; the sequence is LPLTGKVFLS…INEYHKEMGL (139 aa).

Belongs to the CarB family. As to quaternary structure, composed of two chains; the small (or glutamine) chain promotes the hydrolysis of glutamine to ammonia, which is used by the large (or ammonia) chain to synthesize carbamoyl phosphate. Tetramer of heterodimers (alpha,beta)4. Requires Mg(2+) as cofactor. It depends on Mn(2+) as a cofactor.

The catalysed reaction is hydrogencarbonate + L-glutamine + 2 ATP + H2O = carbamoyl phosphate + L-glutamate + 2 ADP + phosphate + 2 H(+). The enzyme catalyses hydrogencarbonate + NH4(+) + 2 ATP = carbamoyl phosphate + 2 ADP + phosphate + 2 H(+). It functions in the pathway amino-acid biosynthesis; L-arginine biosynthesis; carbamoyl phosphate from bicarbonate: step 1/1. Its pathway is pyrimidine metabolism; UMP biosynthesis via de novo pathway; (S)-dihydroorotate from bicarbonate: step 1/3. Large subunit of the glutamine-dependent carbamoyl phosphate synthetase (CPSase). CPSase catalyzes the formation of carbamoyl phosphate from the ammonia moiety of glutamine, carbonate, and phosphate donated by ATP, constituting the first step of 2 biosynthetic pathways, one leading to arginine and/or urea and the other to pyrimidine nucleotides. The large subunit (synthetase) binds the substrates ammonia (free or transferred from glutamine from the small subunit), hydrogencarbonate and ATP and carries out an ATP-coupled ligase reaction, activating hydrogencarbonate by forming carboxy phosphate which reacts with ammonia to form carbamoyl phosphate. The chain is Carbamoyl phosphate synthase large chain from Methanosarcina acetivorans (strain ATCC 35395 / DSM 2834 / JCM 12185 / C2A).